The primary structure comprises 203 residues: MSRYTGPSWKVSRRLGISLSGTGKELARRPYKPGQHGPNSRGKVSEYGMQLTEKQKLRHMYGMNERQFRTLFIKASKIKEGKHGVNFMVLLEQRLDNVVYRLGLATTRRQARQLVNHGHITVDGKRVDIPSYHVEVGQVIGVREKSQNISTIKEAVEATVGRPAFVSFDTEKLEGSFTRLPERDELYPEIDEALVVEYYNQKL.

The interval 22-45 (TGKELARRPYKPGQHGPNSRGKVS) is disordered. One can recognise an S4 RNA-binding domain in the interval 93-156 (QRLDNVVYRL…QNISTIKEAV (64 aa)).

Belongs to the universal ribosomal protein uS4 family. As to quaternary structure, part of the 30S ribosomal subunit. Contacts protein S5. The interaction surface between S4 and S5 is involved in control of translational fidelity.

Its function is as follows. One of the primary rRNA binding proteins, it binds directly to 16S rRNA where it nucleates assembly of the body of the 30S subunit. Functionally, with S5 and S12 plays an important role in translational accuracy. This Enterococcus faecalis (strain ATCC 700802 / V583) protein is Small ribosomal subunit protein uS4.